We begin with the raw amino-acid sequence, 152 residues long: Large ribosomal subunit protein bL9 (152 aa).

The protein belongs to the bacterial ribosomal protein bL9 family.

Functionally, binds to the 23S rRNA. In Coxiella burnetii (strain Dugway 5J108-111), this protein is Large ribosomal subunit protein bL9.